A 66-amino-acid chain; its full sequence is Cold shock protein 1 (66 aa).

The CSD domain maps to 4 to 63 (GTVKWFNADKGYGFITGEDGNDVFVHFSAIQTDGFKTLEEGQKVTFDEESSDRGPQAANV). Residues 47 to 66 (VTFDEESSDRGPQAANVVPQ) form a disordered region.

Its subcellular location is the cytoplasm. The sequence is that of Cold shock protein 1 (csp) from Lactiplantibacillus plantarum (strain ATCC BAA-793 / NCIMB 8826 / WCFS1) (Lactobacillus plantarum).